We begin with the raw amino-acid sequence, 253 residues long: Glucosamine-6-phosphate deaminase (253 aa).

Catalysis depends on Asp65, which acts as the Proton acceptor; for enolization step. Catalysis depends on Asn133, which acts as the For ring-opening step. The Proton acceptor; for ring-opening step role is filled by His135. The active-site For ring-opening step is Glu140.

It belongs to the glucosamine/galactosamine-6-phosphate isomerase family. NagB subfamily.

It carries out the reaction alpha-D-glucosamine 6-phosphate + H2O = beta-D-fructose 6-phosphate + NH4(+). Its pathway is amino-sugar metabolism; N-acetylneuraminate degradation; D-fructose 6-phosphate from N-acetylneuraminate: step 5/5. Catalyzes the reversible isomerization-deamination of glucosamine 6-phosphate (GlcN6P) to form fructose 6-phosphate (Fru6P) and ammonium ion. In Corynebacterium efficiens (strain DSM 44549 / YS-314 / AJ 12310 / JCM 11189 / NBRC 100395), this protein is Glucosamine-6-phosphate deaminase.